Reading from the N-terminus, the 76-residue chain is Exodeoxyribonuclease 7 small subunit (76 aa).

It belongs to the XseB family. In terms of assembly, heterooligomer composed of large and small subunits.

It is found in the cytoplasm. The catalysed reaction is Exonucleolytic cleavage in either 5'- to 3'- or 3'- to 5'-direction to yield nucleoside 5'-phosphates.. Bidirectionally degrades single-stranded DNA into large acid-insoluble oligonucleotides, which are then degraded further into small acid-soluble oligonucleotides. The protein is Exodeoxyribonuclease 7 small subunit of Geobacillus thermodenitrificans (strain NG80-2).